The sequence spans 635 residues: MSEPIDWLPDGTPFNPRFGDRYHSHTGLAQAREVFLRGCGLPGAWAGQAMWRVLETGFGCGLNFLATWAAWRADPARPRLLHFVSCEAFPVSADDLLRSMQGHGELEPLARALHAQYWGLLPGVHRLAFEGGQVLLTLYIGDAQAMLRQQQPVADAVYLDGFSPQVNPELWDVHTLKAVARCCRRGTRLATWSVAGAVREGLAQCGFRVQKVPGLPPKRSNLQAEFDPAWEPRPVQPELPDVRVAGGPSSVLVIGGGLSGAAVAASLARRGWQVRVLDQGAEPAAGASGLPAGVFAPHVSPDDSLLSRLSRCGVRATLQALEASGLSEGEDWSACGVLEHEVDGKHRLPPAWAGDAAVGAEWSRPADAAALEAAGLPGATVAYWHARGGWLRPARLVRALLAHPGIHWQGRSAVARLEPVAAPGGATHWQAYGSDGTVLAEAPHVVVAAGYGSRPWLPARYPIHPLRGQVSWGTRADSPAAAWPPFPVNGHGNLVPHAGTAGGGIWVMGSTFERGQTELPPAPQEQAQAHAANAAKLEQLLPALAQGLAPAIAGPGAAPGHWAAVRCTAPDRLPFVGPVDAARQAGLWVCAAMGARGLTLSQLCGELLAARMMGEPLPVEVRLARALSTERLPAD.

Residues 1–227 form a tRNA (mnm(5)s(2)U34)-methyltransferase region; it reads MSEPIDWLPD…KRSNLQAEFD (227 aa). The tract at residues 254–635 is FAD-dependent cmnm(5)s(2)U34 oxidoreductase; the sequence is IGGGLSGAAV…ALSTERLPAD (382 aa).

It in the N-terminal section; belongs to the methyltransferase superfamily. tRNA (mnm(5)s(2)U34)-methyltransferase family. In the C-terminal section; belongs to the DAO family. FAD serves as cofactor.

It is found in the cytoplasm. The catalysed reaction is 5-aminomethyl-2-thiouridine(34) in tRNA + S-adenosyl-L-methionine = 5-methylaminomethyl-2-thiouridine(34) in tRNA + S-adenosyl-L-homocysteine + H(+). Catalyzes the last two steps in the biosynthesis of 5-methylaminomethyl-2-thiouridine (mnm(5)s(2)U) at the wobble position (U34) in tRNA. Catalyzes the FAD-dependent demodification of cmnm(5)s(2)U34 to nm(5)s(2)U34, followed by the transfer of a methyl group from S-adenosyl-L-methionine to nm(5)s(2)U34, to form mnm(5)s(2)U34. In Paracidovorax citrulli (strain AAC00-1) (Acidovorax citrulli), this protein is tRNA 5-methylaminomethyl-2-thiouridine biosynthesis bifunctional protein MnmC.